The sequence spans 569 residues: Aspartate--tRNA ligase, cytoplasmic 2 (569 aa).

Residues 1–23 form a disordered region; that stretch reads MSEENNHKEKSKNEIKKEKKKIE. The interval 292 to 295 is aspartate; sequence QFYR. Arg314 provides a ligand contact to L-aspartate. Residues 314-316 and 322-324 contribute to the ATP site; these read RTD and RHL. L-aspartate is bound by residues Ser475 and Arg479. 540 to 543 serves as a coordination point for ATP; it reads GLER.

It belongs to the class-II aminoacyl-tRNA synthetase family. Type 2 subfamily.

The protein resides in the cytoplasm. It carries out the reaction tRNA(Asp) + L-aspartate + ATP = L-aspartyl-tRNA(Asp) + AMP + diphosphate. The sequence is that of Aspartate--tRNA ligase, cytoplasmic 2 (aspS2) from Dictyostelium discoideum (Social amoeba).